Reading from the N-terminus, the 1053-residue chain is Mediator of RNA polymerase II transcription subunit 16 (1053 aa).

The interval 139–170 (KTEGNTEKNKDTKQIGNGSGTNGHGDSPINTP) is disordered. The span at 142-151 (GNTEKNKDTK) shows a compositional bias: basic and acidic residues.

This sequence belongs to the Mediator complex subunit 16 family. As to quaternary structure, component of the Mediator complex.

It is found in the nucleus. Functionally, component of the Mediator complex, a coactivator involved in the regulated transcription of nearly all RNA polymerase II-dependent genes. Mediator functions as a bridge to convey information from gene-specific regulatory proteins to the basal RNA polymerase II transcription machinery. Mediator is recruited to promoters by direct interactions with regulatory proteins and serves as a scaffold for the assembly of a functional preinitiation complex with RNA polymerase II and the general transcription factors. The chain is Mediator of RNA polymerase II transcription subunit 16 (SIN4) from Candida albicans (strain SC5314 / ATCC MYA-2876) (Yeast).